The following is a 109-amino-acid chain: COX assembly mitochondrial protein 2 (109 aa).

In terms of domain architecture, CHCH spans 10–54 (FHSCLDFINALDKCHQKEYYKRIFGLCNNEKDALNKCLKEASLNN). 2 consecutive short sequence motifs (cx9C motif) follow at residues 13-23 (CLDFINALDKC) and 36-46 (CNNEKDALNKC). 2 disulfide bridges follow: cysteine 13–cysteine 46 and cysteine 23–cysteine 36.

The protein belongs to the CMC family. As to quaternary structure, interacts with CMC1.

The protein localises to the mitochondrion inner membrane. The protein resides in the mitochondrion intermembrane space. In terms of biological role, required for mitochondrial cytochrome c oxidase (COX) assembly and respiration. May be involved in copper trafficking and distribution to mitochondrial COX and SOD1. This Saccharomyces cerevisiae (strain ATCC 204508 / S288c) (Baker's yeast) protein is COX assembly mitochondrial protein 2 (CMC2).